The following is a 287-amino-acid chain: Acetylglutamate kinase (287 aa).

Residues 70 to 71 (GG), arginine 92, and asparagine 184 each bind substrate.

Belongs to the acetylglutamate kinase family. ArgB subfamily.

Its subcellular location is the cytoplasm. The enzyme catalyses N-acetyl-L-glutamate + ATP = N-acetyl-L-glutamyl 5-phosphate + ADP. Its pathway is amino-acid biosynthesis; L-arginine biosynthesis; N(2)-acetyl-L-ornithine from L-glutamate: step 2/4. Functionally, catalyzes the ATP-dependent phosphorylation of N-acetyl-L-glutamate. This Ruegeria pomeroyi (strain ATCC 700808 / DSM 15171 / DSS-3) (Silicibacter pomeroyi) protein is Acetylglutamate kinase.